The chain runs to 433 residues: Adenylosuccinate synthetase (433 aa).

Residues 18 to 24 (GDEGKGK) and 46 to 48 (GHT) contribute to the GTP site. The active-site Proton acceptor is the Asp19. Mg(2+)-binding residues include Asp19 and Gly46. IMP is bound by residues 19 to 22 (DEGK), 44 to 47 (NAGH), Thr136, Arg150, Gln229, Thr244, and Arg308. Residue His47 is the Proton donor of the active site. 304-310 (VTTKRMR) provides a ligand contact to substrate. GTP is bound by residues Arg310, 336 to 338 (KID), and 420 to 422 (GTG).

The protein belongs to the adenylosuccinate synthetase family. As to quaternary structure, homodimer. Mg(2+) serves as cofactor.

The protein resides in the cytoplasm. It catalyses the reaction IMP + L-aspartate + GTP = N(6)-(1,2-dicarboxyethyl)-AMP + GDP + phosphate + 2 H(+). Its pathway is purine metabolism; AMP biosynthesis via de novo pathway; AMP from IMP: step 1/2. Plays an important role in the de novo pathway and in the salvage pathway of purine nucleotide biosynthesis. Catalyzes the first committed step in the biosynthesis of AMP from IMP. The sequence is that of Adenylosuccinate synthetase from Schistosoma japonicum (Blood fluke).